Here is a 943-residue protein sequence, read N- to C-terminus: Lysine-specific demethylase JMJ21 (943 aa).

Positions 14 to 60 constitute an F-box domain; that stretch reads LGSLSVLPDETICVLLEYLAPRDIAHLACVSSVMYILCNEEPLWMSL. Residues 216-379 enclose the JmjC domain; it reads EAAPELLKDY…FVCLDMAPGY (164 aa). Residues histidine 262, aspartate 264, and histidine 347 each coordinate Fe cation. Residues 396 to 410 show a composition bias toward acidic residues; the sequence is NSEDLEEETHDEEDN. The segment at 396 to 438 is disordered; it reads NSEDLEEETHDEEDNTLSYSDLTRKEKRTRMNGGGETENREED.

The protein belongs to the JARID1 histone demethylase family. Fe(2+) is required as a cofactor. Mostly expressed in leaves, and, to a lower extent, in inflorescences, roots, siliques and stems.

It is found in the nucleus. May function as histone H3 lysine demethylase and be involved in regulation of gene expression. This chain is Lysine-specific demethylase JMJ21, found in Arabidopsis thaliana (Mouse-ear cress).